The chain runs to 64 residues: Large ribosomal subunit protein bL35 (64 aa).

The segment covering 1–42 (MPKAKTHSGASKRFRRTGTGKIVRQKANRRHLLEHKSSKRTR) has biased composition (basic residues). Residues 1-64 (MPKAKTHSGA…TKRVKSLLNG (64 aa)) are disordered.

Belongs to the bacterial ribosomal protein bL35 family.

The protein is Large ribosomal subunit protein bL35 of Mycobacterium ulcerans (strain Agy99).